A 1073-amino-acid polypeptide reads, in one-letter code: Collagen alpha-2(I) chain (1073 aa).

The interval 1–939 is disordered; it reads APDPGPGPMG…PGPAGGGYDV (939 aa). Low complexity-rich tracts occupy residues 100-148, 178-187, and 194-215; these read EPGA…AAGP, EPGPNGAVGP, and PGNN…AGAP. Pro residues predominate over residues 217–227; sequence FPGPRGGPGPQ. The segment covering 229–239 has biased composition (low complexity); the sequence is PQGAAGQRGLA. A compositionally biased stretch (gly residues) spans 246 to 255; the sequence is GVKGDGGPKG. Low complexity-rich tracts occupy residues 296 to 315, 321 to 348, 386 to 399, and 411 to 423; these read MPGA…PGDA, SGPA…AGPA, APGP…TGAT, and QGAA…QGLP. Over residues 424-433 the composition is skewed to gly residues; the sequence is GPAGGAGEAG. Residues 458–468 are compositionally biased toward low complexity; sequence NPGAAGASGPQ. The span at 481-508 shows a compositional bias: gly residues; it reads GTDGGKGEPGAAGAAGGPGHQGPGGMPG. Basic and acidic residues predominate over residues 519 to 530; that stretch reads KGEKGEAGHRGP. Composition is skewed to low complexity over residues 561 to 575 and 584 to 597; these read SGSF…ARGA and PAGA…PGAD. Positions 607-616 are enriched in gly residues; it reads GPSGGKGESG. Composition is skewed to low complexity over residues 617-642, 653-680, and 708-729; these read PAGP…TGAR, FPGA…PAGK, and SGEK…SGPL. The span at 745 to 757 shows a compositional bias: gly residues; sequence GSPGGAGGVGEPG. Residues 758 to 774 show a composition bias toward low complexity; it reads RVGPAGPAGARGNLGLP. A compositionally biased stretch (gly residues) spans 811-820; it reads GESGPGGAAG. Positions 821–836 are enriched in low complexity; that stretch reads AVGPAGARGAAGPSGP. Residues 837-851 are compositionally biased toward basic and acidic residues; sequence RGEKGVAGEKGERGL. Low complexity-rich tracts occupy residues 857–876 and 906–917; these read LQGM…AGPN and PGARGPPGYVGP. Residues 918–932 show a composition bias toward pro residues; it reads AGPPGSPGLPGPPGP. The 35-residue stretch at 1039–1073 folds into the Fibrillar collagen NC1 domain; sequence RTNKPSRLPLLDLAPLDLGGADQEFGLDLGPVCFK.

This sequence belongs to the fibrillar collagen family.

The protein resides in the secreted. It is found in the extracellular space. The protein localises to the extracellular matrix. The chain is Collagen alpha-2(I) chain from Epinephelus aeneus (White grouper).